A 268-amino-acid chain; its full sequence is Nickel import ATP-binding protein NikE (268 aa).

Positions 4-252 constitute an ABC transporter domain; it reads LNVSGLSHHY…SSDAGRVLQN (249 aa). 45 to 52 contributes to the ATP binding site; sequence GRSGCGKS.

This sequence belongs to the ABC transporter superfamily. Nickel importer (TC 3.A.1.5.3) family. The complex is composed of two ATP-binding proteins (NikD and NikE), two transmembrane proteins (NikB and NikC) and a solute-binding protein (NikA).

The protein resides in the cell inner membrane. It carries out the reaction Ni(2+)(out) + ATP + H2O = Ni(2+)(in) + ADP + phosphate + H(+). Functionally, part of the ABC transporter complex NikABCDE involved in nickel import. Responsible for energy coupling to the transport system. The chain is Nickel import ATP-binding protein NikE from Shigella sonnei (strain Ss046).